We begin with the raw amino-acid sequence, 457 residues long: Argininosuccinate lyase (457 aa).

This sequence belongs to the lyase 1 family. Argininosuccinate lyase subfamily.

It localises to the cytoplasm. The enzyme catalyses 2-(N(omega)-L-arginino)succinate = fumarate + L-arginine. Its pathway is amino-acid biosynthesis; L-arginine biosynthesis; L-arginine from L-ornithine and carbamoyl phosphate: step 3/3. The polypeptide is Argininosuccinate lyase (Klebsiella pneumoniae subsp. pneumoniae (strain ATCC 700721 / MGH 78578)).